A 183-amino-acid polypeptide reads, in one-letter code: uncharacterized protein (183 aa).

To M.leprae ML2442.

This is an uncharacterized protein from Mycobacterium tuberculosis (strain CDC 1551 / Oshkosh).